Reading from the N-terminus, the 350-residue chain is Ketol-acid reductoisomerase (NADP(+)) 2 (350 aa).

One can recognise a KARI N-terminal Rossmann domain in the interval 3–183 (ATIWYEKDAD…GALRAGAIKT (181 aa)). NADP(+) is bound by residues 26–29 (YGSQ), arginine 49, serine 52, serine 54, and 84–87 (DQYQ). Histidine 109 is an active-site residue. Glycine 135 is an NADP(+) binding site. The region spanning 184–327 (TFTEETETDL…PKLRAMFSWN (144 aa)) is the KARI C-terminal knotted domain. Residues aspartate 192, glutamate 196, glutamate 228, and glutamate 232 each contribute to the Mg(2+) site. Serine 253 contributes to the substrate binding site. The segment at 331–350 (AKDKDETESFNGKIARTQVQ) is disordered.

Belongs to the ketol-acid reductoisomerase family. It depends on Mg(2+) as a cofactor.

The catalysed reaction is (2R)-2,3-dihydroxy-3-methylbutanoate + NADP(+) = (2S)-2-acetolactate + NADPH + H(+). It catalyses the reaction (2R,3R)-2,3-dihydroxy-3-methylpentanoate + NADP(+) = (S)-2-ethyl-2-hydroxy-3-oxobutanoate + NADPH + H(+). The protein operates within amino-acid biosynthesis; L-isoleucine biosynthesis; L-isoleucine from 2-oxobutanoate: step 2/4. It participates in amino-acid biosynthesis; L-valine biosynthesis; L-valine from pyruvate: step 2/4. Its function is as follows. Involved in the biosynthesis of branched-chain amino acids (BCAA). Catalyzes an alkyl-migration followed by a ketol-acid reduction of (S)-2-acetolactate (S2AL) to yield (R)-2,3-dihydroxy-isovalerate. In the isomerase reaction, S2AL is rearranged via a Mg-dependent methyl migration to produce 3-hydroxy-3-methyl-2-ketobutyrate (HMKB). In the reductase reaction, this 2-ketoacid undergoes a metal-dependent reduction by NADPH to yield (R)-2,3-dihydroxy-isovalerate. The sequence is that of Ketol-acid reductoisomerase (NADP(+)) 2 from Bifidobacterium longum (strain NCC 2705).